The sequence spans 312 residues: MGEGGYRQINKTLNVCAFDDYLVTQQSRLPKLLDIEQLSPRVLRVLGQNAGKFTLQGTNTYIVGTGQHRLIIDTAQGYREWADLIDVTLSNRSISLSHVFLTHWHGDHTGGVPDLIRMYPHLADGIYKNSPEQGQHPIEEGQIFKVEGATIRAVHGPGHSHDHMCFVLEEENAMFTGDNVLGHGTSAVEQLGLYMDTLRKLQAQGCRTGYPAHGAVIPDLNLKIATELAQKTRREKQCLAALGRIRKERPTGQLASVTVGELIDVVHGTRVNEEVRKMALEPFMEEVLRKLAEDGKVAFRVRKGVKTWFALT.

Zn(2+) is bound by residues His-103, His-105, Asp-107, and His-108. Catalysis depends on Asp-107, which acts as the Proton donor/acceptor.

It belongs to the metallo-beta-lactamase superfamily. The cofactor is Zn(2+).

The enzyme catalyses atrochrysone carboxyl-[ACP] + H2O = atrochrysone carboxylate + holo-[ACP] + H(+). It participates in secondary metabolite biosynthesis. Atrochrysone carboxyl ACP thioesterase; part of the gene cluster that mediates the biosynthesis of the tetrahydroxanthone dimer secalonic acid D. The pathway begins with the synthesis of atrochrysone thioester by the polyketide synthase AacuL. The atrochrysone carboxyl ACP thioesterase AacuM then breaks the thioester bond and releases the atrochrysone carboxylic acid from AacuL. Atrochrysone carboxylic acid is decarboxylated by the decarboxylase AacuI, and oxidized by the anthrone oxygenase AacuG to yield emodin. Emodin is then reduced to emodin hydroquinone by a yet unidentified oxidoreductase. A-ring reduction by the short chain dehydrogenase AacuN, dehydration by the scytalone dehydratase-like protein AacuK and probable spontaneous re-oxidation, results in overall deoxygenation to chrysophanol. Baeyer-Villiger oxidation by the Baeyer-Villiger monooxygenase (BVMO) AacuH then yields monodictyphenone. Monodictyphenone is transformed into compounds with the tetrahydroxanthone skeleton via methylesterification by the methyltransferase AacuQ, followed by the action of the flavin-dependent monooxygenase AacuC, the isomerase AacuP, and the short chain dehydrogenase/reductase AacuF or AacuD. AacuF and AacuD should accept the same compound as a substrate but perform the ketoreduction with a different stereoselectivity, thus yielding blennolides B and A, respectively. In the final step of the biosynthesis, the cytochrome P450 monooxygenase AacuE accepts blennolide B and/or blennolide A to conduct the dimerization reaction to furnish the tetrahydroxanthone dimers, secalonic acids D, B, and F. The sequence is that of Atrochrysone carboxyl ACP thioesterase AacuM from Aspergillus aculeatus (strain ATCC 16872 / CBS 172.66 / WB 5094).